The sequence spans 696 residues: Elongation factor G 2 (696 aa).

Positions 5 to 281 (SKYRNIGIFA…AVVDYLPSPT (277 aa)) constitute a tr-type G domain. GTP is bound by residues 14–21 (AHVDAGKT), 78–82 (DTPGH), and 132–135 (NKLD).

Belongs to the TRAFAC class translation factor GTPase superfamily. Classic translation factor GTPase family. EF-G/EF-2 subfamily.

Its subcellular location is the cytoplasm. Functionally, catalyzes the GTP-dependent ribosomal translocation step during translation elongation. During this step, the ribosome changes from the pre-translocational (PRE) to the post-translocational (POST) state as the newly formed A-site-bound peptidyl-tRNA and P-site-bound deacylated tRNA move to the P and E sites, respectively. Catalyzes the coordinated movement of the two tRNA molecules, the mRNA and conformational changes in the ribosome. The chain is Elongation factor G 2 from Vibrio parahaemolyticus serotype O3:K6 (strain RIMD 2210633).